The chain runs to 132 residues: Ribonuclease VapC (132 aa).

Residues 4-123 (YMLDTNIVIY…SNNLREFERV (120 aa)) enclose the PINc domain. Residues aspartate 7 and aspartate 98 each contribute to the Mg(2+) site.

The protein belongs to the PINc/VapC protein family. Probably forms a complex with cognate antitoxin VapB2. Mg(2+) serves as cofactor.

In terms of biological role, toxic component of a type II toxin-antitoxin (TA) system. Acts as an RNase. Its toxic effect is neutralized by cognate antitoxin VapB2 but not by non-cognate antitoxin VapB1. This Haemophilus influenzae (strain 86-028NP) protein is Ribonuclease VapC.